The chain runs to 224 residues: Fibrillarin-like rRNA/tRNA 2'-O-methyltransferase (224 aa).

Residues 82–83 (TT), 100–101 (EF), 125–126 (DA), and 145–148 (DVAQ) each bind S-adenosyl-L-methionine.

This sequence belongs to the methyltransferase superfamily. Fibrillarin family. In terms of assembly, interacts with nop5. Component of box C/D small ribonucleoprotein (sRNP) particles that contain rpl7ae, FlpA and nop5, plus a guide RNA.

Functionally, involved in pre-rRNA and tRNA processing. Utilizes the methyl donor S-adenosyl-L-methionine to catalyze the site-specific 2'-hydroxyl methylation of ribose moieties in rRNA and tRNA. Site specificity is provided by a guide RNA that base pairs with the substrate. Methylation occurs at a characteristic distance from the sequence involved in base pairing with the guide RNA. The sequence is that of Fibrillarin-like rRNA/tRNA 2'-O-methyltransferase from Methanothermobacter thermautotrophicus (strain ATCC 29096 / DSM 1053 / JCM 10044 / NBRC 100330 / Delta H) (Methanobacterium thermoautotrophicum).